The following is a 274-amino-acid chain: tRNA-cytidine(32) 2-sulfurtransferase (274 aa).

The PP-loop motif signature appears at 40–45; sequence SGGKDS. Positions 115, 118, and 206 each coordinate [4Fe-4S] cluster.

It belongs to the TtcA family. As to quaternary structure, homodimer. The cofactor is Mg(2+). [4Fe-4S] cluster serves as cofactor.

The protein resides in the cytoplasm. It catalyses the reaction cytidine(32) in tRNA + S-sulfanyl-L-cysteinyl-[cysteine desulfurase] + AH2 + ATP = 2-thiocytidine(32) in tRNA + L-cysteinyl-[cysteine desulfurase] + A + AMP + diphosphate + H(+). Its pathway is tRNA modification. In terms of biological role, catalyzes the ATP-dependent 2-thiolation of cytidine in position 32 of tRNA, to form 2-thiocytidine (s(2)C32). The sulfur atoms are provided by the cysteine/cysteine desulfurase (IscS) system. The protein is tRNA-cytidine(32) 2-sulfurtransferase of Pseudomonas fluorescens (strain ATCC BAA-477 / NRRL B-23932 / Pf-5).